The chain runs to 166 residues: Chorion protein S18 (166 aa).

Positions 1–17 (MMKFMCLFVCAIAAVSA) are cleaved as a signal peptide.

It belongs to the chorion protein S15/S18 family.

The protein resides in the secreted. Its function is as follows. Chorion membrane (egg shell) protein; plays a role in protecting the egg from the environment. This is Chorion protein S18 (Cp18) from Drosophila grimshawi (Hawaiian fruit fly).